A 452-amino-acid polypeptide reads, in one-letter code: D-inositol 3-phosphate glycosyltransferase (452 aa).

1D-myo-inositol 3-phosphate is bound at residue H25. Residues 31–32 (QP) and G39 each bind UDP-N-acetyl-alpha-D-glucosamine. 1D-myo-inositol 3-phosphate is bound by residues 36-41 (DAGGMN), K94, Y127, T151, and R171. Residues R245, K250, and Q309 each contribute to the UDP-N-acetyl-alpha-D-glucosamine site. 3 residues coordinate Mg(2+): Y318, R319, and S321. E331 and E339 together coordinate UDP-N-acetyl-alpha-D-glucosamine. A Mg(2+)-binding site is contributed by T345.

The protein belongs to the glycosyltransferase group 1 family. MshA subfamily. As to quaternary structure, homodimer.

It carries out the reaction 1D-myo-inositol 3-phosphate + UDP-N-acetyl-alpha-D-glucosamine = 1D-myo-inositol 2-acetamido-2-deoxy-alpha-D-glucopyranoside 3-phosphate + UDP + H(+). Functionally, catalyzes the transfer of a N-acetyl-glucosamine moiety to 1D-myo-inositol 3-phosphate to produce 1D-myo-inositol 2-acetamido-2-deoxy-glucopyranoside 3-phosphate in the mycothiol biosynthesis pathway. The chain is D-inositol 3-phosphate glycosyltransferase from Rhodococcus jostii (strain RHA1).